A 593-amino-acid chain; its full sequence is ATP-dependent lipid A-core flippase (593 aa).

6 helical membrane-spanning segments follow: residues Y33 to G55, I67 to F87, A146 to V166, W169 to I189, V258 to G278, and G284 to L304. In terms of domain architecture, ABC transmembrane type-1 spans A38–K319. In terms of domain architecture, ABC transporter spans V351–R585. Residue G383–T390 participates in ATP binding.

The protein belongs to the ABC transporter superfamily. Lipid exporter (TC 3.A.1.106) family. As to quaternary structure, homodimer.

It is found in the cell membrane. The catalysed reaction is ATP + H2O + lipid A-core oligosaccharideSide 1 = ADP + phosphate + lipid A-core oligosaccharideSide 2.. In terms of biological role, involved in lipopolysaccharide (LPS) biosynthesis. Translocates lipid A-core from the inner to the outer leaflet of the inner membrane. Transmembrane domains (TMD) form a pore in the inner membrane and the ATP-binding domain (NBD) is responsible for energy generation. The protein is ATP-dependent lipid A-core flippase of Francisella novicida.